We begin with the raw amino-acid sequence, 306 residues long: Golgi to ER traffic protein 2 (306 aa).

Residues 1–18 (MSEISDAEKRRILREKRQ) are compositionally biased toward basic and acidic residues. The tract at residues 1 to 100 (MSEISDAEKR…PPGSAEQQNG (100 aa)) is disordered. Topologically, residues 1 to 172 (MSEISDAEKR…VEAHNIAVNK (172 aa)) are cytoplasmic. Residues 34 to 57 (TGQTENSFLSTESPLDSRESTYPA) show a composition bias toward polar residues. The segment covering 68–77 (DSTKQMDELL) has biased composition (basic and acidic residues). Low complexity predominate over residues 78 to 90 (AKATSKTTSKASS). The segment covering 91 to 100 (PPGSAEQQNG) has biased composition (polar residues). A helical membrane pass occupies residues 173-193 (LKSYTILVKWLFFLLPYLYYI). At 194 to 214 (THSARDPFQHNAVNYVLDRSN) the chain is on the lumenal side. The chain crosses the membrane as a helical span at residues 215-234 (FFTVFTTFEIVALSVYYQLL). Residues 235-281 (MSAEKSHNVNTLDNNSKILKLVSMVPPGLVPIPNLRGKVAQALQYWD) lie on the Cytoplasmic side of the membrane. The chain crosses the membrane as a helical span at residues 282-302 (VVSMYLTDLCFAIVLAGLFQY). The Lumenal portion of the chain corresponds to 303–306 (YHSM).

This sequence belongs to the GET2 family. Component of the Golgi to ER traffic (GET) complex, which is composed of GET1, GET2 and GET3. Within the complex, GET1 and GET2 form a heterotetramer which is stabilized by phosphatidylinositol binding and which binds to the GET3 homodimer.

The protein localises to the endoplasmic reticulum membrane. Its subcellular location is the golgi apparatus membrane. In terms of biological role, required for the post-translational delivery of tail-anchored (TA) proteins to the endoplasmic reticulum. Together with GET1, acts as a membrane receptor for soluble GET3, which recognizes and selectively binds the transmembrane domain of TA proteins in the cytosol. The GET complex cooperates with the HDEL receptor ERD2 to mediate the ATP-dependent retrieval of resident ER proteins that contain a C-terminal H-D-E-L retention signal from the Golgi to the ER. This chain is Golgi to ER traffic protein 2, found in Lachancea thermotolerans (strain ATCC 56472 / CBS 6340 / NRRL Y-8284) (Yeast).